We begin with the raw amino-acid sequence, 373 residues long: Putative C-P lyase subunit protein HtxH (373 aa).

Belongs to the PhnI family.

Its function is as follows. Belongs to an operon involved in hypophosphite oxidation. Exact function not known. This chain is Putative C-P lyase subunit protein HtxH (htxH), found in Stutzerimonas stutzeri (Pseudomonas stutzeri).